We begin with the raw amino-acid sequence, 971 residues long: MGLKKRVSFDWLLKIGIILVLAFLGLFGIIFGSYKLLNDSRLGVVFNGSTTTTVYFLNHKSKDANKELDPTQKKDGNGSGNNTEMITDVNGFLNNIEKSYANSLYAQGFSSVNITKNSHDTSAKELSDKGVFDSSWLVNDGLPSISVTFEQRREEARTRARKRQIDAQVKRNALSAIEHNYKLSLETTDGIVLFDSFDKEFIRNSLTAVVPQTTNTNSALTFEYKLSKNVITKESLHNDFLDFIKSKSLTDSDYNTGNGQKSVEGSGKWFKDKANGSAQNGNKTLVLWKDKEGAVQYVRNIFNVPKGGTDYLTFNEREKNLWDFLHAEGNFSSGDNLFLQKNNNGNSPITKASDITLKNIYYIYAAPTHFSQVATKDNNNKDAADVVAVANSADTRKLRSGDATGFSGLFSNYILAEIRTEDPVAKNGDPVKVNATLQSFLDSNNQRLEHGGNIKFQVANFVNNDGSYVPASYLEASRVKVLLSNGFPETATIAAANTKLVNAPLSNTLARDVSNFASSFIALGVIILLATIALGIRYKLLGLYKALALALSAISSLAFFSAVGGVVDVFSFVGIFFVVAVNIINLITLAELFLRNIKNNASIVESWKLCLKRSFFTMIETHICWLLSALVVIYLSNYQVQQLGTLMAVSAITSYFLNYGLGVILVWLFVSSHSGLEWRFFLYKKDAQALTKTSSNYSILTENNDIQTDFFISKNQHDFFGKKKWSLLFIWLTVLAFGVVMLGLYLGAPQLLGNFLAADIESSTGIMLGVGVISLLYLLYSLPRYGVAYGISYLIALILLAAGLFGAMYLANFIFRIDQSTIQLIIFVYLFWLFFQARIGQTTIWTYCYWFKRSLKDRVFVKNLFNDNVNSQWRLDLIGSSVLILLFIVYAAFNFGGINGTINLVIFYLIAIVALFSVFVNGLPLFSFGLINGWLSPYNYVQIHITLRHKKQMFKEVDQIEEQLISGINSF.

Transmembrane regions (helical) follow at residues 11-31, 516-536, 547-567, 569-589, 615-635, 651-671, 727-747, 763-783, 795-815, 817-837, 878-898, 900-920, and 923-943; these read WLLK…GIIF, FASS…ALGI, LALA…GGVV, VFSF…LITL, FFTM…VIYL, AITS…LFVS, LLFI…LYLG, STGI…YSLP, IALI…NFIF, IDQS…FFQA, IGSS…FGGI, GTIN…SVFV, and LPLF…YVQI.

It is found in the cell membrane. This is an uncharacterized protein from Mycoplasma pneumoniae (strain ATCC 29342 / M129 / Subtype 1) (Mycoplasmoides pneumoniae).